Here is a 650-residue protein sequence, read N- to C-terminus: Acetyl-coenzyme A synthetase (650 aa).

CoA is bound by residues 191 to 194 (RGGR), Thr-311, and Asn-335. Residues 387 to 389 (GEP), 411 to 416 (DTWWQT), Asp-500, and Arg-515 each bind ATP. Ser-523 serves as a coordination point for CoA. Arg-526 is a binding site for ATP. Mg(2+) is bound by residues Val-537, His-539, and Val-542. Arg-584 is a binding site for CoA. An N6-acetyllysine modification is found at Lys-609.

The protein belongs to the ATP-dependent AMP-binding enzyme family. Mg(2+) is required as a cofactor. Acetylated. Deacetylation by the SIR2-homolog deacetylase activates the enzyme.

It catalyses the reaction acetate + ATP + CoA = acetyl-CoA + AMP + diphosphate. In terms of biological role, catalyzes the conversion of acetate into acetyl-CoA (AcCoA), an essential intermediate at the junction of anabolic and catabolic pathways. AcsA undergoes a two-step reaction. In the first half reaction, AcsA combines acetate with ATP to form acetyl-adenylate (AcAMP) intermediate. In the second half reaction, it can then transfer the acetyl group from AcAMP to the sulfhydryl group of CoA, forming the product AcCoA. This chain is Acetyl-coenzyme A synthetase, found in Shewanella sp. (strain W3-18-1).